The following is a 685-amino-acid chain: Hemocyanin subunit X (685 aa).

A signal peptide spans 1-20 (MKYCTESLILILAVIGCISA). The Cu cation site is built by His210, His214, and His243. Asn329 is a glycosylation site (N-linked (GlcNAc...) asparagine). His367, His371, and His407 together coordinate Cu cation. Cys577 and Cys625 are joined by a disulfide.

This sequence belongs to the tyrosinase family. Hemocyanin subfamily.

It is found in the secreted. Its subcellular location is the extracellular space. Its function is as follows. Hemocyanins are copper-containing oxygen carriers occurring freely dissolved in the hemolymph of many mollusks and arthropods. The protein is Hemocyanin subunit X (HCX) of Scutigera coleoptrata (House centipede).